Here is a 453-residue protein sequence, read N- to C-terminus: Iron-sulfur cluster assembly SufBD family protein slr0076 (453 aa).

This sequence belongs to the iron-sulfur cluster assembly SufBD family.

The polypeptide is Iron-sulfur cluster assembly SufBD family protein slr0076 (Synechocystis sp. (strain ATCC 27184 / PCC 6803 / Kazusa)).